A 352-amino-acid chain; its full sequence is Serine protease 55 (352 aa).

Residues methionine 1–leucine 18 form the signal peptide. A Peptidase S1 domain is found at isoleucine 68–glutamine 300. Cysteine 93 and cysteine 109 form a disulfide bridge. Catalysis depends on charge relay system residues histidine 108 and aspartate 156. Cystine bridges form between cysteine 189–cysteine 256, cysteine 222–cysteine 235, and cysteine 246–cysteine 276. Asparagine 240 carries N-linked (GlcNAc...) asparagine glycosylation. Serine 250 serves as the catalytic Charge relay system. Positions alanine 308–proline 330 are disordered. Positions proline 319–proline 330 are enriched in low complexity. Residue serine 325 is the site of GPI-anchor amidated serine attachment. The propeptide at glycine 326–tyrosine 352 is removed in mature form.

Belongs to the peptidase S1 family. In terms of tissue distribution, only detected in testis. Expressed in spermatogonia, spermatocytes, spermatids, Leydig and Sertoli cells. Expressed in prostate cancer and ovarian cancer (at protein level).

The protein localises to the cell membrane. It is found in the cytoplasm. Its subcellular location is the cytosol. In terms of biological role, probable serine protease, which plays a crucial role in the fertility of male mice including sperm migration and sperm-egg interaction. This Homo sapiens (Human) protein is Serine protease 55 (PRSS55).